Reading from the N-terminus, the 78-residue chain is Large ribosomal subunit protein bL28 (78 aa).

It belongs to the bacterial ribosomal protein bL28 family.

The chain is Large ribosomal subunit protein bL28 from Trichodesmium erythraeum (strain IMS101).